The following is a 32-amino-acid chain: Calcitonin (32 aa).

An intrachain disulfide couples Cys-1 to Cys-7. Residue Pro-32 is modified to Proline amide.

It belongs to the calcitonin family.

The protein localises to the secreted. Causes a rapid but short-lived drop in the level of calcium and phosphate in blood by promoting the incorporation of those ions in the bones. The chain is Calcitonin from Anguilla japonica (Japanese eel).